A 189-amino-acid polypeptide reads, in one-letter code: Putative transcription factor ovo-like protein 3 (189 aa).

The tract at residues 1 to 20 is disordered; the sequence is MPRVFLVRSRRPQPPNWSHL. 4 C2H2-type zinc fingers span residues 69–91, 97–119, 125–148, and 164–186; these read LGCPLCPKAFPLQRMLTRHLKCH, HVCHYCGKGFHDAFDLKRHMRTH, FRCGACGKAFTQRCSLEAHLAKVH, and HVCEDCGFTSSRPDAYAQHRTLH.

Belongs to the krueppel C2H2-type zinc-finger protein family.

The protein localises to the nucleus. Its function is as follows. May act as a transcription regulator. The polypeptide is Putative transcription factor ovo-like protein 3 (Ovol3) (Mus musculus (Mouse)).